Reading from the N-terminus, the 436-residue chain is UPF0597 protein YhaM (436 aa).

This sequence belongs to the UPF0597 family.

Functionally, thought to be a D-serine dehydratase, however it does not complement a dsdA (D-serine dehydratase) mutant in strain CFT073, suggesting it may not have that function. This chain is UPF0597 protein YhaM, found in Escherichia coli O157:H7.